A 321-amino-acid chain; its full sequence is Ferredoxin--NADP reductase (321 aa).

FAD is bound by residues aspartate 34, glutamine 42, tyrosine 47, valine 87, phenylalanine 119, aspartate 278, and threonine 319.

It belongs to the ferredoxin--NADP reductase type 2 family. As to quaternary structure, homodimer. FAD is required as a cofactor.

The enzyme catalyses 2 reduced [2Fe-2S]-[ferredoxin] + NADP(+) + H(+) = 2 oxidized [2Fe-2S]-[ferredoxin] + NADPH. The sequence is that of Ferredoxin--NADP reductase from Streptococcus pneumoniae serotype 4 (strain ATCC BAA-334 / TIGR4).